We begin with the raw amino-acid sequence, 113 residues long: Heavy metal-associated isoprenylated plant protein 15 (113 aa).

The HMA domain maps to 1–65 (MIVWMGVYDQ…KWGKAKLTLY (65 aa)). Residues 69 to 89 (DALKEAKIAEAKQKREEIERE) are a coiled coil. Cys-110 is modified (cysteine methyl ester). The S-farnesyl cysteine moiety is linked to residue Cys-110. The propeptide at 111–113 (VIC) is removed in mature form.

This sequence belongs to the HIPP family. In terms of tissue distribution, expressed in embryo sacs.

Functionally, probable heavy-metal-binding protein. The chain is Heavy metal-associated isoprenylated plant protein 15 from Arabidopsis thaliana (Mouse-ear cress).